The chain runs to 356 residues: Glucose 1-dehydrogenase (356 aa).

The disordered stretch occupies residues 1-26 (MDAIVVSKADRTPRLVDRPRPDPTPG). The segment covering 8 to 21 (KADRTPRLVDRPRP) has biased composition (basic and acidic residues). Asp38 serves as a coordination point for Zn(2+). Thr40 is a binding site for substrate. Zn(2+) contacts are provided by His63 and Glu64. The disordered stretch occupies residues 86-107 (TVRRPRGDPTPQFDRGQPDMAA). Substrate-binding residues include Glu113 and Glu149. Residue Glu149 coordinates Zn(2+). NADP(+) is bound by residues 180-183 (NGSL), 205-206 (RR), 270-272 (LGV), and 300-302 (SVN). A substrate-binding site is contributed by Asn302.

This sequence belongs to the zinc-containing alcohol dehydrogenase family. Glucose 1-dehydrogenase subfamily. Zn(2+) serves as cofactor.

The enzyme catalyses D-glucose + NAD(+) = D-glucono-1,5-lactone + NADH + H(+). It catalyses the reaction D-glucose + NADP(+) = D-glucono-1,5-lactone + NADPH + H(+). In terms of biological role, catalyzes the NAD(P)(+)-dependent oxidation of D-glucose to D-gluconate via gluconolactone. Can utilize both NAD(+) and NADP(+) as electron acceptor. Is involved in the degradation of glucose through a modified Entner-Doudoroff pathway. In Halobacterium salinarum (strain ATCC 700922 / JCM 11081 / NRC-1) (Halobacterium halobium), this protein is Glucose 1-dehydrogenase.